Here is a 33-residue protein sequence, read N- to C-terminus: Cytochrome b6-f complex subunit 8 (33 aa).

The helical transmembrane segment at 2-22 (LFTFAWASLAAIFTFSIAMVV) threads the bilayer.

It belongs to the PetN family. The 4 large subunits of the cytochrome b6-f complex are cytochrome b6, subunit IV (17 kDa polypeptide, PetD), cytochrome f and the Rieske protein, while the 4 small subunits are PetG, PetL, PetM and PetN. The complex functions as a dimer.

It localises to the cellular thylakoid membrane. Its function is as follows. Component of the cytochrome b6-f complex, which mediates electron transfer between photosystem II (PSII) and photosystem I (PSI), cyclic electron flow around PSI, and state transitions. The protein is Cytochrome b6-f complex subunit 8 of Prochlorococcus marinus (strain SARG / CCMP1375 / SS120).